Reading from the N-terminus, the 402-residue chain is Argininosuccinate synthase (402 aa).

An ATP-binding site is contributed by 7-15 (LYSGGLDTS). Tyrosine 83 serves as a coordination point for L-citrulline. Glycine 113 contacts ATP. L-aspartate contacts are provided by threonine 115, asparagine 119, and aspartate 120. Asparagine 119 serves as a coordination point for L-citrulline. 5 residues coordinate L-citrulline: arginine 123, serine 169, serine 178, glutamate 253, and tyrosine 265.

The protein belongs to the argininosuccinate synthase family. Type 1 subfamily. As to quaternary structure, homotetramer.

The protein localises to the cytoplasm. It carries out the reaction L-citrulline + L-aspartate + ATP = 2-(N(omega)-L-arginino)succinate + AMP + diphosphate + H(+). It participates in amino-acid biosynthesis; L-arginine biosynthesis; L-arginine from L-ornithine and carbamoyl phosphate: step 2/3. The protein is Argininosuccinate synthase of Thermoplasma acidophilum (strain ATCC 25905 / DSM 1728 / JCM 9062 / NBRC 15155 / AMRC-C165).